Reading from the N-terminus, the 389-residue chain is Succinate--CoA ligase [ADP-forming] subunit beta (389 aa).

Residues 9–244 form the ATP-grasp domain; it reads KQILRKYGIP…PSQMSNNEAR (236 aa). Residues lysine 46, 53–55, isoleucine 102, and glutamate 107 each bind ATP; that span reads GRG. Asparagine 199 and aspartate 213 together coordinate Mg(2+). Substrate contacts are provided by residues asparagine 264 and 321–323; that span reads GIM.

Belongs to the succinate/malate CoA ligase beta subunit family. Heterotetramer of two alpha and two beta subunits. It depends on Mg(2+) as a cofactor.

The catalysed reaction is succinate + ATP + CoA = succinyl-CoA + ADP + phosphate. The enzyme catalyses GTP + succinate + CoA = succinyl-CoA + GDP + phosphate. It functions in the pathway carbohydrate metabolism; tricarboxylic acid cycle; succinate from succinyl-CoA (ligase route): step 1/1. Functionally, succinyl-CoA synthetase functions in the citric acid cycle (TCA), coupling the hydrolysis of succinyl-CoA to the synthesis of either ATP or GTP and thus represents the only step of substrate-level phosphorylation in the TCA. The beta subunit provides nucleotide specificity of the enzyme and binds the substrate succinate, while the binding sites for coenzyme A and phosphate are found in the alpha subunit. The polypeptide is Succinate--CoA ligase [ADP-forming] subunit beta (Protochlamydia amoebophila (strain UWE25)).